A 673-amino-acid polypeptide reads, in one-letter code: Armadillo repeat-containing protein 8 (673 aa).

Residue Ala-2 is modified to N-acetylalanine. ARM repeat units follow at residues 51–92 (NKQK…SLAM), 95–134 (ENNV…TIFT), 138–176 (TPEE…HCCK), 178–217 (PDHQ…VLAF), 224–265 (MTLV…YMCR), 269–309 (IRTD…YLIE), 313–352 (ELQR…HDLK), 374–413 (DIRK…SLSR), 416–455 (QQLR…NLLL), 458–497 (SPSK…NMAF), 501–540 (QKIK…NLLS), 543–585 (PHID…NIAD), 588–627 (TAKE…NLTW), and 634–673 (QERQ…QYLA). Ser-337 bears the Phosphoserine mark. At Ser-512 the chain carries Phosphoserine.

In terms of assembly, identified in the CTLH complex that contains GID4, RANBP9 and/or RANBP10, MKLN1, MAEA, RMND5A (or alternatively its paralog RMND5B), GID8, ARMC8, WDR26 and YPEL5. Within this complex, MAEA, RMND5A (or alternatively its paralog RMND5B), GID8, WDR26, and RANBP9 and/or RANBP10 form the catalytic core, while GID4, MKLN1, ARMC8 and YPEL5 have ancillary roles.

It is found in the nucleus. The protein localises to the cytoplasm. Component of the CTLH E3 ubiquitin-protein ligase complex that selectively accepts ubiquitin from UBE2H and mediates ubiquitination and subsequent proteasomal degradation of the transcription factor HBP1. The polypeptide is Armadillo repeat-containing protein 8 (Armc8) (Mus musculus (Mouse)).